We begin with the raw amino-acid sequence, 230 residues long: Poxin (230 aa).

H43 functions as the Proton donor in the catalytic mechanism. The active-site Shared with catalytic histidine of dimeric partner is Y174. Residue K178 is the Proton acceptor; shared with catalytic histidine of dimeric partner of the active site.

This sequence belongs to the poxin family. Homodimer.

It catalyses the reaction 2',3'-cGAMP + H2O = Gp(2'-5')Ap(3') + H(+). Nuclease that cleaves host 2',3'-cGAMP. This Orgyia pseudotsugata multicapsid polyhedrosis virus (OpMNPV) protein is Poxin (P26).